A 569-amino-acid chain; its full sequence is Carotenoid cleavage dioxygenase 8 homolog B, chloroplastic (569 aa).

The N-terminal 43 residues, 1 to 43, are a transit peptide targeting the chloroplast; the sequence is MSPAMLQASSLCVSAALSGAASRPGRLASQGHQGKRAVAQPLA. Positions 23–81 are disordered; that stretch reads RPGRLASQGHQGKRAVAQPLAASAVTEAAPPAPVVAPPARPVDAPRRRGGRGGGGGGGE. Positions 52-62 are enriched in pro residues; that stretch reads PPAPVVAPPAR. Fe cation is bound by residues His-251, His-301, His-368, and His-558.

The protein belongs to the carotenoid oxygenase family. Fe(2+) serves as cofactor. Expressed in parenchyma cells of the root stele, shoot apex, leaf buds, xylem parenchyma cells of the stem, inflorescences and panicles.

Its subcellular location is the plastid. It localises to the chloroplast. It catalyses the reaction 9-cis-10'-apo-beta-carotenal + 2 O2 = (2E,4E,6E)-7-hydroxy-4-methylhepta-2,4,6-trienal + (11R)-carlactone. The catalysed reaction is all-trans-10'-apo-beta-carotenal + O2 = (2E,4E,6E)-4-methylocta-2,4,6-trienedial + 13-apo-beta-carotenone. Its function is as follows. Involved in strigolactones biosynthesis by cleaving the C(27) 9-cis-10'-apo-beta-carotenal produced by CCD7. Produces the C(19) carlactone and a C(8) hydroxyaldehyde. Also shows lower activity with all-trans-10'-apo-beta-carotenal producing a C(9) dialdehyde and the C(18) 13-apo-beta-carotenone. Strigolactones are hormones that inhibit tillering and shoot branching through the MAX-dependent pathway, contribute to the regulation of shoot architectural response to phosphate-limiting conditions and function as rhizosphere signal that stimulates hyphal branching of arbuscular mycorrhizal fungi and trigger seed germination of root parasitic weeds. The chain is Carotenoid cleavage dioxygenase 8 homolog B, chloroplastic (CCD8B) from Oryza sativa subsp. japonica (Rice).